A 256-amino-acid polypeptide reads, in one-letter code: MSNPANTELSYLKSLVNELNEKIAVLEGKAPANQGVRMVLVGPPGAGKGTQAPKILERFQNMVCHLATGDLLRQQVAMGTDLGKQAKKIMDQGALVSDEIMVGMIKDQLETNRSCKKGFILDGFPRTTPQAEKLDQMLSDRKQKLDHVIELQIPDELLISRITGRLIHPGSGRSYHKIFSPPKQPMKDDITGEPLVQRSDDNEEALRKRLATYHKQTTAVTDYYKKHGIWSPIDATQSPNTVWQSISAIFNNGASA.

45–50 (GAGKGT) is an ATP binding site. Residues 67 to 96 (ATGDLLRQQVAMGTDLGKQAKKIMDQGALV) are NMP. AMP-binding positions include threonine 68, arginine 73, 94–96 (ALV), 123–126 (GFPR), and glutamine 130. Residues 164-201 (GRLIHPGSGRSYHKIFSPPKQPMKDDITGEPLVQRSDD) form an LID region. Residues arginine 165 and 174 to 175 (SY) contribute to the ATP site. The AMP site is built by arginine 198 and arginine 209. Residue glutamine 237 participates in ATP binding.

The protein belongs to the adenylate kinase family. AK2 subfamily. In terms of assembly, monomer.

The protein resides in the cytoplasm. The protein localises to the cytosol. It localises to the mitochondrion intermembrane space. The enzyme catalyses AMP + ATP = 2 ADP. In terms of biological role, catalyzes the reversible transfer of the terminal phosphate group between ATP and AMP. Plays an important role in cellular energy homeostasis and in adenine nucleotide metabolism. Adenylate kinase activity is critical for regulation of the phosphate utilization and the AMP de novo biosynthesis pathways. This is Adenylate kinase from Malassezia globosa (strain ATCC MYA-4612 / CBS 7966) (Dandruff-associated fungus).